Reading from the N-terminus, the 318-residue chain is Rhomboid-related protein 4 (318 aa).

The Cytoplasmic portion of the chain corresponds to Met1–His21. Residues Val22–Phe42 form a helical membrane-spanning segment. The Extracellular portion of the chain corresponds to Leu43–Tyr106. Residues Val107–Ala127 form a helical membrane-spanning segment. Topologically, residues Glu128–Arg137 are cytoplasmic. A helical transmembrane segment spans residues Ser138–Asn154. Catalysis depends on Ser144, which acts as the Nucleophile. Residues Asn155–Glu179 are Extracellular-facing. The chain crosses the membrane as a helical span at residues Leu180–Met204. The active site involves His195. Residues Tyr205 to Gln318 lie on the Cytoplasmic side of the membrane. Residues Ser271–Asp286 form a ubiquitin-binding domain (UBD) region. Residues Trp285 to Gln318 form a disordered region. Positions Ser302–Gln318 are enriched in basic and acidic residues. The VCP/p97-interacting motif (VIM) stretch occupies residues Pro303–Gln318.

The protein belongs to the peptidase S54 family. As to quaternary structure, interacts with BIK and STEAP3. Interacts (via C-terminal domain) with VCP. Interacts with ubiquitin and ubiquitinated proteins.

It localises to the endoplasmic reticulum membrane. It is found in the mitochondrion membrane. It carries out the reaction Cleaves type-1 transmembrane domains using a catalytic dyad composed of serine and histidine that are contributed by different transmembrane domains.. With respect to regulation, inhibited by aprotinin. Its function is as follows. Intramembrane-cleaving serine protease that cleaves single transmembrane or multi-pass membrane proteins in the hydrophobic plane of the membrane, luminal loops and juxtamembrane regions. Involved in regulated intramembrane proteolysis and the subsequent release of functional polypeptides from their membrane anchors. Functional component of endoplasmic reticulum-associated degradation (ERAD) for misfolded membrane proteins. Required for the degradation process of some specific misfolded endoplasmic reticulum (ER) luminal proteins. Participates in the transfer of misfolded proteins from the ER to the cytosol, where they are destroyed by the proteasome in a ubiquitin-dependent manner. Functions in BIK, MPZ, PKD1, PTCRA, RHO, STEAP3 and TRAC processing. Involved in the regulation of exosomal secretion; inhibits the TSAP6-mediated secretion pathway. Involved in the regulation of apoptosis; modulates BIK-mediated apoptotic activity. Also plays a role in the regulation of spermatogenesis; inhibits apoptotic activity in spermatogonia. The chain is Rhomboid-related protein 4 (RHBDD1) from Pongo abelii (Sumatran orangutan).